The following is a 324-amino-acid chain: D-alanine--D-alanine ligase (324 aa).

The ATP-grasp domain maps to 121–321; the sequence is NQYLKAFGVR…IKDVMTDIIE (201 aa). 149-204 serves as a coordination point for ATP; sequence MEKIGLPCFIKPSLGGSSFGVTKVKTKEQIQPAIVKAFEEAQEVLVEAFMEGTELT. Mg(2+) is bound by residues Asp275, Glu288, and Asn290.

This sequence belongs to the D-alanine--D-alanine ligase family. It depends on Mg(2+) as a cofactor. Mn(2+) is required as a cofactor.

It localises to the cytoplasm. The enzyme catalyses 2 D-alanine + ATP = D-alanyl-D-alanine + ADP + phosphate + H(+). It participates in cell wall biogenesis; peptidoglycan biosynthesis. In terms of biological role, cell wall formation. The sequence is that of D-alanine--D-alanine ligase from Bacteroides thetaiotaomicron (strain ATCC 29148 / DSM 2079 / JCM 5827 / CCUG 10774 / NCTC 10582 / VPI-5482 / E50).